Here is a 187-residue protein sequence, read N- to C-terminus: Pyridoxal 5'-phosphate synthase subunit PdxT (187 aa).

47–49 (GES) is a binding site for L-glutamine. Cysteine 76 serves as the catalytic Nucleophile. L-glutamine contacts are provided by residues arginine 102 and 128-129 (IR). Residues histidine 165 and glutamate 167 each act as charge relay system in the active site.

It belongs to the glutaminase PdxT/SNO family. As to quaternary structure, in the presence of PdxS, forms a dodecamer of heterodimers. Only shows activity in the heterodimer.

The enzyme catalyses aldehydo-D-ribose 5-phosphate + D-glyceraldehyde 3-phosphate + L-glutamine = pyridoxal 5'-phosphate + L-glutamate + phosphate + 3 H2O + H(+). It carries out the reaction L-glutamine + H2O = L-glutamate + NH4(+). Its pathway is cofactor biosynthesis; pyridoxal 5'-phosphate biosynthesis. Catalyzes the hydrolysis of glutamine to glutamate and ammonia as part of the biosynthesis of pyridoxal 5'-phosphate. The resulting ammonia molecule is channeled to the active site of PdxS. This chain is Pyridoxal 5'-phosphate synthase subunit PdxT, found in Methanococcus maripaludis (strain C5 / ATCC BAA-1333).